Here is a 936-residue protein sequence, read N- to C-terminus: MSRFYRQGSSSESSSESSSDSDVQVKKPTRYVSSSEDEIEEKRIVLSAKDKIWQQFDESLKKVRNALKTNDWVSTTSEFDNMTKLITNGKTTRIIEKEGFPPSFIKALFIIQTSHRDLTTEQKKKLHANNNKSYNSIKQKLKKTCDLYAKELKPYHDNPALVNEQENKANSDDDDDDLSESESEESESSDDDKGKGKGKAAFGKKPATKAVVAKKPLTKKGDDDSESESEESESESEELISESWSSDSDDDSDSDSDDDSGDNKWMIKDDKKVVAKASVTTVRKTDKDKLDRRNAVVSPLSGSGSAVPTAGEGEGEKLTQDQIMKKVKEVISNRGKLKTDPMKQIQQLEYFYSLIQGDKETFIVLYELIAAQFDTASVKVALSIPVWQKVADGIKKLLEILETNTNFVLVLEHQEPTISKGQVAVTGNLLALFEMLDDEFSKSLQSINYPTKEYLDRLQDEQIILDLGESLQKYYESAGNNGAAAKIAIRRIEHIYYKSSNLKNNIIPSTMPLSEQITLMSKLSSFVYKFGDERLNARTILCNIYFNAINNKFHEARDMMLMSHLQDNPTLMDVSTQILFNRAMVQLGLCAFRCGYIQEAQNCVVEFSGLRKDLLAQGLSVQSKTAEKDTVREVEETTRILPAHMWIPIDLIETVNLISGMLIAVPQNAYRPFDNKFKTCKFYQRHMDSVDRQIFIAPSETSKDIIYQASKALSAGDWQQCLEHVNTLRFWSLIPDIDSVREKLTRIVQEVSLKTFLFTYSTSYDSILLSELADRFHLPKSQVHSIVAKMMNNHEISASMEHSTESITFRAEQTKLQYLALHYSESLVDFVEQNERIYDVKFGTSYRKKGDNDHLPIAGGQHHGHQHHGHQHHGHHHHNQQQQQHHQQQQQTTQHHHHHHQNQNQGNQQYQNKKHHNSNQQKSHKKRQNNSLVVNN.

Disordered stretches follow at residues 1–38 (MSRF…SEDE), 156–265 (HDNP…DNKW), and 283–317 (RKTD…EGEK). Positions 9-22 (SSSESSSESSSDSD) are enriched in low complexity. The segment covering 172–190 (DDDDDDLSESESEESESSD) has biased composition (acidic residues). Over residues 199-215 (KAAFGKKPATKAVVAKK) the composition is skewed to low complexity. Composition is skewed to acidic residues over residues 223-240 (DDSE…EELI) and 247-260 (DSDD…DDDS). Positions 283–294 (RKTDKDKLDRRN) are enriched in basic and acidic residues. Residues 643–814 (AHMWIPIDLI…ESITFRAEQT (172 aa)) form the PCI domain. Residues 845–936 (SYRKKGDNDH…RQNNSLVVNN (92 aa)) form a disordered region. Over residues 862–879 (HHGHQHHGHQHHGHHHHN) the composition is skewed to basic residues. Composition is skewed to low complexity over residues 880–893 (QQQQ…QQTT) and 902–911 (NQNQGNQQYQ). Positions 912–928 (NKKHHNSNQQKSHKKRQ) are enriched in basic residues.

This sequence belongs to the eIF-3 subunit C family. In terms of assembly, component of the eukaryotic translation initiation factor 3 (eIF-3) complex.

The protein resides in the cytoplasm. Component of the eukaryotic translation initiation factor 3 (eIF-3) complex, which is involved in protein synthesis of a specialized repertoire of mRNAs and, together with other initiation factors, stimulates binding of mRNA and methionyl-tRNAi to the 40S ribosome. The eIF-3 complex specifically targets and initiates translation of a subset of mRNAs involved in cell proliferation. The polypeptide is Eukaryotic translation initiation factor 3 subunit C (eif3C) (Dictyostelium discoideum (Social amoeba)).